Here is a 102-residue protein sequence, read N- to C-terminus: Large ribosomal subunit protein uL23 (102 aa).

Belongs to the universal ribosomal protein uL23 family. As to quaternary structure, part of the 50S ribosomal subunit. Contacts protein L29, and trigger factor when it is bound to the ribosome.

Its function is as follows. One of the early assembly proteins it binds 23S rRNA. One of the proteins that surrounds the polypeptide exit tunnel on the outside of the ribosome. Forms the main docking site for trigger factor binding to the ribosome. This chain is Large ribosomal subunit protein uL23, found in Paramagnetospirillum magneticum (strain ATCC 700264 / AMB-1) (Magnetospirillum magneticum).